The sequence spans 265 residues: Cyclin-C (265 aa).

A Cyclin N-terminal domain is found at 48–151 (IQVLGEQLKL…LLENLDCCLI (104 aa)).

It belongs to the cyclin family. Cyclin C subfamily. As to quaternary structure, component of the Cdk8 module of the Mediator complex.

It localises to the nucleus. In terms of biological role, component of the Mediator complex, a coactivator involved in regulated gene transcription of nearly all RNA polymerase II-dependent genes. Mediator functions as a bridge to convey information from gene-specific regulatory proteins to the basal RNA polymerase II transcription machinery. Mediator is recruited to promoters by direct interactions with regulatory proteins and serves as a scaffold for the assembly of a functional preinitiation complex with RNA polymerase II and the general transcription factors. Binds to and activates cyclin-dependent kinase Cdk8 that phosphorylates the CTD (C-terminal domain) of the large subunit of RNA polymerase II (RNAp II), which may inhibit the formation of a transcription initiation complex. The sequence is that of Cyclin-C (CycC) from Aedes aegypti (Yellowfever mosquito).